We begin with the raw amino-acid sequence, 862 residues long: Protein SEY1 (862 aa).

Residues 1 to 747 (MVSNGHFASA…KRSAIGGMTQ (747 aa)) are Cytoplasmic-facing. The GB1/RHD3-type G domain maps to 49-306 (GFNYHLISVF…IPADGFAVYA (258 aa)). 59-66 (GSQSTGKS) provides a ligand contact to GTP. Positions 481–507 (SNYTQELALYQKDLEKISAQLRKDEMR) form a coiled coil. Residues 748-768 (IPVYFYILLLALGWNEIVAVL) form a helical membrane-spanning segment. Residues 769-771 (RNP) lie on the Lumenal side of the membrane. A helical transmembrane segment spans residues 772–792 (LYFFMLFLCAVGAFVTYQLNL). The Cytoplasmic portion of the chain corresponds to 793–862 (WGPMIKMAEA…DDDDEDEGSW (70 aa)). Residues 819 to 862 (LEPSEAGPHAARYKNSTEEYEMSNVKAPQRTNSGDDDDEDEGSW) are disordered. Acidic residues predominate over residues 852–862 (GDDDDEDEGSW).

The protein belongs to the TRAFAC class dynamin-like GTPase superfamily. GB1/RHD3 GTPase family. RHD3 subfamily.

It is found in the endoplasmic reticulum membrane. Its function is as follows. Cooperates with the reticulon proteins and tubule-shaping DP1 family proteins to generate and maintain the structure of the tubular endoplasmic reticulum network. Has GTPase activity, which is required for its function in ER organization. This Uncinocarpus reesii (strain UAMH 1704) protein is Protein SEY1.